The sequence spans 1959 residues: Myosin-9 (1959 aa).

The region spanning alanine 27–proline 77 is the Myosin N-terminal SH3-like domain. The Myosin motor domain maps to serine 81 to aspartate 776. Position 174 to 181 (glycine 174 to threonine 181) interacts with ATP. An actin-binding region spans residues leucine 654 to histidine 676. An IQ domain is found at isoleucine 779 to alanine 808. The stretch at leucine 837–leucine 1925 forms a coiled coil. Disordered regions lie at residues glutamate 1118–glutamate 1168, arginine 1694–glycine 1717, leucine 1879–lysine 1917, and lysine 1936–glutamate 1959. Composition is skewed to basic and acidic residues over residues serine 1122–leucine 1148 and arginine 1694–aspartate 1704. Over residues aspartate 1947–glutamate 1959 the composition is skewed to basic and acidic residues.

The protein belongs to the TRAFAC class myosin-kinesin ATPase superfamily. Myosin family. In terms of assembly, myosin is a hexameric protein that consists of 2 heavy chain subunits (MHC), 2 alkali light chain subunits (MLC) and 2 regulatory light chain subunits (MLC-2). As to expression, expressed in fibroblasts, brain, lung, kidney, spleen, and skeletal, cardiac and smooth muscles.

It is found in the cytoplasm. Its subcellular location is the cytoskeleton. The protein resides in the cell cortex. It localises to the cytoplasmic vesicle. The protein localises to the secretory vesicle. It is found in the cortical granule. In terms of biological role, cellular myosin that appears to play a role in cytokinesis, cell shape, and specialized functions such as secretion and capping. The protein is Myosin-9 (MYH9) of Gallus gallus (Chicken).